The sequence spans 181 residues: MQPTHSVNCEPLKSLVRTVPDFPKPGILFYDITTLLKDRQGFAKLIDALAEHYIGKNIDLVLGIEARGFIFGPALAYRLNAGFVPVRKPRKLPARTVRVTYDLEYGSDTLEIHEDAIEPGQRIVLVDDLLATGGTMEATVKLVRQLGGEIAGLAFAVELDFLKGRERFPDLDVFSLLHYSE.

Belongs to the purine/pyrimidine phosphoribosyltransferase family. As to quaternary structure, homodimer.

It localises to the cytoplasm. It catalyses the reaction AMP + diphosphate = 5-phospho-alpha-D-ribose 1-diphosphate + adenine. Its pathway is purine metabolism; AMP biosynthesis via salvage pathway; AMP from adenine: step 1/1. Functionally, catalyzes a salvage reaction resulting in the formation of AMP, that is energically less costly than de novo synthesis. This chain is Adenine phosphoribosyltransferase, found in Acidobacterium capsulatum (strain ATCC 51196 / DSM 11244 / BCRC 80197 / JCM 7670 / NBRC 15755 / NCIMB 13165 / 161).